The following is a 275-amino-acid chain: Ribosomal RNA small subunit methyltransferase A (275 aa).

Positions 21, 23, 48, 69, 94, and 115 each coordinate S-adenosyl-L-methionine.

This sequence belongs to the class I-like SAM-binding methyltransferase superfamily. rRNA adenine N(6)-methyltransferase family. RsmA subfamily.

The protein resides in the cytoplasm. The enzyme catalyses adenosine(1518)/adenosine(1519) in 16S rRNA + 4 S-adenosyl-L-methionine = N(6)-dimethyladenosine(1518)/N(6)-dimethyladenosine(1519) in 16S rRNA + 4 S-adenosyl-L-homocysteine + 4 H(+). Functionally, specifically dimethylates two adjacent adenosines (A1518 and A1519) in the loop of a conserved hairpin near the 3'-end of 16S rRNA in the 30S particle. May play a critical role in biogenesis of 30S subunits. The protein is Ribosomal RNA small subunit methyltransferase A of Clostridium botulinum (strain Okra / Type B1).